Consider the following 248-residue polypeptide: Deoxyribose-phosphate aldolase (248 aa).

Residue Asp-106 is the Proton donor/acceptor of the active site. Lys-168 acts as the Schiff-base intermediate with acetaldehyde in catalysis. Lys-197 serves as the catalytic Proton donor/acceptor.

The protein belongs to the DeoC/FbaB aldolase family. DeoC type 1 subfamily.

Its subcellular location is the cytoplasm. It catalyses the reaction 2-deoxy-D-ribose 5-phosphate = D-glyceraldehyde 3-phosphate + acetaldehyde. It functions in the pathway carbohydrate degradation; 2-deoxy-D-ribose 1-phosphate degradation; D-glyceraldehyde 3-phosphate and acetaldehyde from 2-deoxy-alpha-D-ribose 1-phosphate: step 2/2. Its function is as follows. Catalyzes a reversible aldol reaction between acetaldehyde and D-glyceraldehyde 3-phosphate to generate 2-deoxy-D-ribose 5-phosphate. The sequence is that of Deoxyribose-phosphate aldolase from Rhizobium meliloti (strain 1021) (Ensifer meliloti).